Consider the following 179-residue polypeptide: Large ribosomal subunit protein uL5 (179 aa).

It belongs to the universal ribosomal protein uL5 family. As to quaternary structure, part of the 50S ribosomal subunit; part of the 5S rRNA/L5/L18/L25 subcomplex. Contacts the 5S rRNA and the P site tRNA. Forms a bridge to the 30S subunit in the 70S ribosome.

This is one of the proteins that bind and probably mediate the attachment of the 5S RNA into the large ribosomal subunit, where it forms part of the central protuberance. In the 70S ribosome it contacts protein S13 of the 30S subunit (bridge B1b), connecting the 2 subunits; this bridge is implicated in subunit movement. Contacts the P site tRNA; the 5S rRNA and some of its associated proteins might help stabilize positioning of ribosome-bound tRNAs. The chain is Large ribosomal subunit protein uL5 from Thiobacillus denitrificans (strain ATCC 25259 / T1).